The primary structure comprises 264 residues: MRVIMGIASLGFLWAVFLLPLVFGVPTEETTFGESVASHLPKGCRRCCDPEDLMSSDDTVQAPVSPYVLPEVRPYINITILKGDKGDRGPTGTPGKPGKNGTRGDRGSQGVKGDKGQAGSPGSSCQTHYSAFSVGRKTGLHSSENFLSLLFDRVFVNTDGHFDMATGSFVAPLRGLYFFSLNVHSWNYKETYVHIVHNEQAVVILYAQPSERSIMQSQSVMLPLVPGDRVWVRLFKRERENGIYSDDVDTYITFSGHLIKAEDN.

The first 24 residues, 1 to 24, serve as a signal peptide directing secretion; sequence MRVIMGIASLGFLWAVFLLPLVFG. N-linked (GlcNAc...) asparagine glycosylation occurs at Asn-77. The tract at residues 81 to 125 is disordered; it reads LKGDKGDRGPTGTPGKPGKNGTRGDRGSQGVKGDKGQAGSPGSSC. Residues 83–124 enclose the Collagen-like domain; that stretch reads GDKGDRGPTGTPGKPGKNGTRGDRGSQGVKGDKGQAGSPGSS. The segment covering 90 to 100 has biased composition (low complexity); the sequence is PTGTPGKPGKN. Residues 125 to 264 form the C1q domain; the sequence is CQTHYSAFSV…SGHLIKAEDN (140 aa).

It is found in the secreted. In Mus musculus (Mouse), this protein is Complement C1q tumor necrosis factor-related protein 6 (C1qtnf6).